The chain runs to 314 residues: Putative S-adenosyl-L-methionine-dependent methyltransferase MAV_4441 (314 aa).

S-adenosyl-L-methionine-binding positions include Asp-138 and 167 to 168 (DL).

Belongs to the UPF0677 family.

Exhibits S-adenosyl-L-methionine-dependent methyltransferase activity. The protein is Putative S-adenosyl-L-methionine-dependent methyltransferase MAV_4441 of Mycobacterium avium (strain 104).